A 604-amino-acid chain; its full sequence is Linalool synthase Tps-5073L4, chloroplastic (604 aa).

Residues Met-1 to Ser-36 constitute a chloroplast transit peptide. Residues Arg-323, Asp-360, Asp-364, Arg-501, and Asp-504 each coordinate (2E)-geranyl diphosphate. Mg(2+)-binding residues include Asp-360 and Asp-364. A DDXXD motif motif is present at residues Asp-360–Asp-364. Residues Asp-504, Thr-508, and Glu-512 each contribute to the Mg(2+) site.

It belongs to the terpene synthase family. Tpsb subfamily. As to quaternary structure, monomer. Mg(2+) is required as a cofactor. The cofactor is Mn(2+).

It is found in the plastid. It localises to the chloroplast. It carries out the reaction (2E)-geranyl diphosphate + H2O = linalool + diphosphate. The protein operates within secondary metabolite biosynthesis; terpenoid biosynthesis. Monoterpene synthase (mono-TPS) involved in the biosynthesis of monoterpenes natural products. Catalyzes the conversion of (2E)-geranyl diphosphate (GPP) into linalool. This Perilla frutescens (Beefsteak mint) protein is Linalool synthase Tps-5073L4, chloroplastic.